Here is a 444-residue protein sequence, read N- to C-terminus: Glutamyl-tRNA reductase (444 aa).

Substrate contacts are provided by residues Thr49–Arg52, Ser109, Glu114–Gln116, and Gln120. The active-site Nucleophile is Cys50. Gly189–Ser194 contacts NADP(+). Residues Lys425–Gly444 form a disordered region.

This sequence belongs to the glutamyl-tRNA reductase family. In terms of assembly, homodimer.

The enzyme catalyses (S)-4-amino-5-oxopentanoate + tRNA(Glu) + NADP(+) = L-glutamyl-tRNA(Glu) + NADPH + H(+). It functions in the pathway porphyrin-containing compound metabolism; protoporphyrin-IX biosynthesis; 5-aminolevulinate from L-glutamyl-tRNA(Glu): step 1/2. Functionally, catalyzes the NADPH-dependent reduction of glutamyl-tRNA(Glu) to glutamate 1-semialdehyde (GSA). This chain is Glutamyl-tRNA reductase, found in Pelotomaculum thermopropionicum (strain DSM 13744 / JCM 10971 / SI).